A 402-amino-acid polypeptide reads, in one-letter code: Oxysterol-binding protein 12 (402 aa).

The tract at residues 333–366 (NNNNDKETAEEKAKIEEKQRKEESERREKGILWE) is disordered. A compositionally biased stretch (basic and acidic residues) spans 336–366 (NDKETAEEKAKIEEKQRKEESERREKGILWE).

Belongs to the OSBP family.

This Dictyostelium discoideum (Social amoeba) protein is Oxysterol-binding protein 12 (osbL).